A 56-amino-acid polypeptide reads, in one-letter code: Small ribosomal subunit protein uS14 (56 aa).

C21, C24, C39, and C42 together coordinate Zn(2+).

It belongs to the universal ribosomal protein uS14 family. In terms of assembly, component of the small ribosomal subunit. Mature ribosomes consist of a small (40S) and a large (60S) subunit. The 40S subunit contains about 32 different proteins and 1 molecule of RNA (18S). The 60S subunit contains 45 different proteins and 3 molecules of RNA (25S, 5.8S and 5S). Requires Zn(2+) as cofactor.

It localises to the cytoplasm. Its function is as follows. Component of the ribosome, a large ribonucleoprotein complex responsible for the synthesis of proteins in the cell. The small ribosomal subunit (SSU) binds messenger RNAs (mRNAs) and translates the encoded message by selecting cognate aminoacyl-transfer RNA (tRNA) molecules. The large subunit (LSU) contains the ribosomal catalytic site termed the peptidyl transferase center (PTC), which catalyzes the formation of peptide bonds, thereby polymerizing the amino acids delivered by tRNAs into a polypeptide chain. The nascent polypeptides leave the ribosome through a tunnel in the LSU and interact with protein factors that function in enzymatic processing, targeting, and the membrane insertion of nascent chains at the exit of the ribosomal tunnel. This is Small ribosomal subunit protein uS14 from Candida albicans (strain SC5314 / ATCC MYA-2876) (Yeast).